We begin with the raw amino-acid sequence, 405 residues long: Tryptophan synthase beta chain (405 aa).

N6-(pyridoxal phosphate)lysine is present on lysine 98.

Belongs to the TrpB family. As to quaternary structure, tetramer of two alpha and two beta chains. The cofactor is pyridoxal 5'-phosphate.

It carries out the reaction (1S,2R)-1-C-(indol-3-yl)glycerol 3-phosphate + L-serine = D-glyceraldehyde 3-phosphate + L-tryptophan + H2O. It participates in amino-acid biosynthesis; L-tryptophan biosynthesis; L-tryptophan from chorismate: step 5/5. In terms of biological role, the beta subunit is responsible for the synthesis of L-tryptophan from indole and L-serine. The chain is Tryptophan synthase beta chain from Methylococcus capsulatus (strain ATCC 33009 / NCIMB 11132 / Bath).